The chain runs to 95 residues: Aspartyl/glutamyl-tRNA(Asn/Gln) amidotransferase subunit C (95 aa).

Belongs to the GatC family. Heterotrimer of A, B and C subunits.

The enzyme catalyses L-glutamyl-tRNA(Gln) + L-glutamine + ATP + H2O = L-glutaminyl-tRNA(Gln) + L-glutamate + ADP + phosphate + H(+). It carries out the reaction L-aspartyl-tRNA(Asn) + L-glutamine + ATP + H2O = L-asparaginyl-tRNA(Asn) + L-glutamate + ADP + phosphate + 2 H(+). Allows the formation of correctly charged Asn-tRNA(Asn) or Gln-tRNA(Gln) through the transamidation of misacylated Asp-tRNA(Asn) or Glu-tRNA(Gln) in organisms which lack either or both of asparaginyl-tRNA or glutaminyl-tRNA synthetases. The reaction takes place in the presence of glutamine and ATP through an activated phospho-Asp-tRNA(Asn) or phospho-Glu-tRNA(Gln). This Nitrobacter hamburgensis (strain DSM 10229 / NCIMB 13809 / X14) protein is Aspartyl/glutamyl-tRNA(Asn/Gln) amidotransferase subunit C.